A 1361-amino-acid chain; its full sequence is Restriction of telomere capping protein 1 (1361 aa).

Residues 1 to 104 form a disordered region; that stretch reads MGARRESGLH…DERSEYFGEA (104 aa). Composition is skewed to polar residues over residues 39–48 and 64–73; these read TYGSKSAQSS and SQRSLLSSNF. WD repeat units lie at residues 180 to 221, 229 to 269, 277 to 315, 337 to 376, 405 to 452, and 455 to 493; these read RKIS…AKDS, EHSR…YKVN, SGSDSVRDVKWMPTYDFASLGADTSLCSSGRSNKFASVH, AHSGPGLCMHWHPHMDYIISGGRDGKCALWYVGDKVNSMV, NTSH…IPQN, and TTAAPSLGFVWWNEDIVFNIDKQSVISAWDIRYEPTLLD. The disordered stretch occupies residues 564–593; sequence QYKHQDQEAADRESDHDKELEKERETEVDQ. Positions 566–593 are enriched in basic and acidic residues; sequence KHQDQEAADRESDHDKELEKERETEVDQ. Residues 849–890 form a WD 7 repeat; that stretch reads ENVNHLVGLIFLSTHNAETYASVNDLQNFKIWMLIRDSLLND. 3 disordered regions span residues 896–916, 953–982, and 1091–1113; these read DGSTGRRDASGGAANSDKNGI, NLGRLSEQNLKATNQNTTAKLDDTRKLASS, and TSTSLGSGASKRSSMHSTDSYHK. The segment covering 958–971 has biased composition (polar residues); sequence SEQNLKATNQNTTA. Residues 1091-1101 are compositionally biased toward low complexity; it reads TSTSLGSGASK. WD repeat units follow at residues 1146–1192 and 1240–1278; these read GSIS…QQLY and FEISAHLLKNCPWDDILGAGSGQSTVRLFCENCGKLIVN. An RING-type; degenerate zinc finger spans residues 1314–1356; sequence CVYCEQPMKKLALSFLNCGHGGHFECLQQWFLDEGMSECPSGC.

It belongs to the WD repeat RTC1 family.

It localises to the vacuole. Functionally, may be involved in a process influencing telomere capping. The polypeptide is Restriction of telomere capping protein 1 (RTC1) (Eremothecium gossypii (strain ATCC 10895 / CBS 109.51 / FGSC 9923 / NRRL Y-1056) (Yeast)).